The chain runs to 431 residues: Glutamate--tRNA ligase 1 (431 aa).

The 'HIGH' region motif lies at 6-16; sequence PSPTGDMHIGN. A 'KMSKS' region motif is present at residues 235 to 239; the sequence is KMSKR. ATP is bound at residue Lys-238.

It belongs to the class-I aminoacyl-tRNA synthetase family. Glutamate--tRNA ligase type 1 subfamily. Monomer.

The protein resides in the cytoplasm. The catalysed reaction is tRNA(Glu) + L-glutamate + ATP = L-glutamyl-tRNA(Glu) + AMP + diphosphate. Its function is as follows. Catalyzes the attachment of glutamate to tRNA(Glu) in a two-step reaction: glutamate is first activated by ATP to form Glu-AMP and then transferred to the acceptor end of tRNA(Glu). The protein is Glutamate--tRNA ligase 1 of Campylobacter curvus (strain 525.92).